A 136-amino-acid polypeptide reads, in one-letter code: Protein NrdI (136 aa).

Belongs to the NrdI family.

Its function is as follows. Probably involved in ribonucleotide reductase function. This is Protein NrdI from Salmonella typhi.